The sequence spans 489 residues: Ent-kaurenoic acid oxidase 2 (489 aa).

Residues 5-25 traverse the membrane as a helical segment; sequence GLILMWFPLIILGLFVLKWVL. Cys-436 contributes to the heme binding site.

Belongs to the cytochrome P450 family. Heme is required as a cofactor. In terms of tissue distribution, widely expressed. Highly expressed in influorescence stem, influorescence, and silique tissue. Weakly expressed in cauline and rosette leaves. Expressed at a weaker level in stem and influorescence than AtKAO1/CYP88A3.

Its subcellular location is the endoplasmic reticulum membrane. It catalyses the reaction ent-kaur-16-en-19-oate + 3 reduced [NADPH--hemoprotein reductase] + 3 O2 = gibberellin A12 + 3 oxidized [NADPH--hemoprotein reductase] + 4 H2O + 4 H(+). The catalysed reaction is ent-kaur-16-en-19-oate + reduced [NADPH--hemoprotein reductase] + O2 = ent-7alpha-hydroxykaur-16-en-19-oate + oxidized [NADPH--hemoprotein reductase] + H2O + H(+). It carries out the reaction ent-7alpha-hydroxykaur-16-en-19-oate + reduced [NADPH--hemoprotein reductase] + O2 = gibberellin A12 aldehyde + oxidized [NADPH--hemoprotein reductase] + 2 H2O + H(+). The enzyme catalyses gibberellin A12 aldehyde + reduced [NADPH--hemoprotein reductase] + O2 = gibberellin A12 + oxidized [NADPH--hemoprotein reductase] + H2O + 2 H(+). The protein operates within plant hormone biosynthesis; gibberellin biosynthesis. Functionally, catalyzes three successive oxidations of ent-kaurenoic acid giving gibberellin 12 (GA12), a key step in gibberellins (GAs) biosynthesis. GAs, which are involved many processes, including stem elongation, play a central role in plant development. This is Ent-kaurenoic acid oxidase 2 from Arabidopsis thaliana (Mouse-ear cress).